Consider the following 189-residue polypeptide: Ribulose bisphosphate carboxylase small subunit, chloroplastic (189 aa).

The transit peptide at 1–66 (MASSIMALSS…KTTSNGSRVR (66 aa)) directs the protein to the chloroplast.

The protein belongs to the RuBisCO small chain family. As to quaternary structure, heterohexadecamer of 8 large and 8 small subunits.

The protein localises to the plastid. The protein resides in the chloroplast. Functionally, ruBisCO catalyzes two reactions: the carboxylation of D-ribulose 1,5-bisphosphate, the primary event in carbon dioxide fixation, as well as the oxidative fragmentation of the pentose substrate. Both reactions occur simultaneously and in competition at the same active site. Although the small subunit is not catalytic it is essential for maximal activity. In Larix laricina (Tamarack), this protein is Ribulose bisphosphate carboxylase small subunit, chloroplastic.